The following is a 129-amino-acid chain: Lysozyme C (129 aa).

The 129-residue stretch at 1–129 folds into the C-type lysozyme domain; the sequence is KVYGRCELAA…VNAWTRGCRL (129 aa). Disulfide bonds link Cys6-Cys127, Cys30-Cys115, Cys64-Cys80, and Cys76-Cys94. Residues Glu35 and Asp52 contribute to the active site.

It belongs to the glycosyl hydrolase 22 family. In terms of assembly, monomer.

It localises to the secreted. It catalyses the reaction Hydrolysis of (1-&gt;4)-beta-linkages between N-acetylmuramic acid and N-acetyl-D-glucosamine residues in a peptidoglycan and between N-acetyl-D-glucosamine residues in chitodextrins.. Lysozymes have primarily a bacteriolytic function; those in tissues and body fluids are associated with the monocyte-macrophage system and enhance the activity of immunoagents. This Chrysolophus amherstiae (Lady Amherst's pheasant) protein is Lysozyme C (LYZ).